We begin with the raw amino-acid sequence, 211 residues long: ATP phosphoribosyltransferase (211 aa).

Belongs to the ATP phosphoribosyltransferase family. Short subfamily. In terms of assembly, heteromultimer composed of HisG and HisZ subunits.

It is found in the cytoplasm. The enzyme catalyses 1-(5-phospho-beta-D-ribosyl)-ATP + diphosphate = 5-phospho-alpha-D-ribose 1-diphosphate + ATP. It functions in the pathway amino-acid biosynthesis; L-histidine biosynthesis; L-histidine from 5-phospho-alpha-D-ribose 1-diphosphate: step 1/9. Functionally, catalyzes the condensation of ATP and 5-phosphoribose 1-diphosphate to form N'-(5'-phosphoribosyl)-ATP (PR-ATP). Has a crucial role in the pathway because the rate of histidine biosynthesis seems to be controlled primarily by regulation of HisG enzymatic activity. The chain is ATP phosphoribosyltransferase from Pseudomonas fluorescens (strain SBW25).